Reading from the N-terminus, the 126-residue chain is 13 kDa ribonucleoprotein-associated protein (126 aa).

This sequence belongs to the eukaryotic ribosomal protein eL8 family. In terms of assembly, component of the U3 snoRNP particle. Binds to the C'/D and B/C motifs in U3 snoRNA. Component of the 25S U4/U6.U5 tri-snRNP particle, a subcomplex of the spliceosome. Binds to the 5' stem-loop of U4 snRNA.

It is found in the nucleus. The protein resides in the nucleolus. Functionally, common component of the spliceosome and rRNA processing machinery. In association with the spliceosomal U4/U6.U5 tri-snRNP particle, required for splicing of pre-mRNA. In association with box C/D snoRNPs, required for processing of pre-ribosomal RNA (rRNA) and site-specific 2'-O-methylation of substrate RNAs. Essential for the accumulation and stability of U4 snRNA, U6 snRNA, and box C/D snoRNAs. The protein is 13 kDa ribonucleoprotein-associated protein (SNU13) of Candida glabrata (strain ATCC 2001 / BCRC 20586 / JCM 3761 / NBRC 0622 / NRRL Y-65 / CBS 138) (Yeast).